A 292-amino-acid chain; its full sequence is Shikimate dehydrogenase (NADP(+)) (292 aa).

Shikimate is bound by residues 25–27 and T72; that span reads SKS. The Proton acceptor role is filled by K76. Residues N97 and D113 each contribute to the shikimate site. NADP(+) is bound by residues 137–141, 161–166, and M230; these read GAGGA and NRTQSK. Y232 provides a ligand contact to shikimate. Residue G254 participates in NADP(+) binding.

It belongs to the shikimate dehydrogenase family. In terms of assembly, homodimer.

The enzyme catalyses shikimate + NADP(+) = 3-dehydroshikimate + NADPH + H(+). It participates in metabolic intermediate biosynthesis; chorismate biosynthesis; chorismate from D-erythrose 4-phosphate and phosphoenolpyruvate: step 4/7. In terms of biological role, involved in the biosynthesis of the chorismate, which leads to the biosynthesis of aromatic amino acids. Catalyzes the reversible NADPH linked reduction of 3-dehydroshikimate (DHSA) to yield shikimate (SA). This chain is Shikimate dehydrogenase (NADP(+)), found in Shewanella sp. (strain MR-7).